A 274-amino-acid polypeptide reads, in one-letter code: 3-methyl-2-oxobutanoate hydroxymethyltransferase (274 aa).

Residues Asp-50 and Asp-89 each coordinate Mg(2+). 3-methyl-2-oxobutanoate contacts are provided by residues 50-51 (DS), Asp-89, and Lys-119. Glu-121 contributes to the Mg(2+) binding site. The active-site Proton acceptor is the Glu-188.

This sequence belongs to the PanB family. Homodecamer; pentamer of dimers. It depends on Mg(2+) as a cofactor.

It localises to the cytoplasm. The catalysed reaction is 3-methyl-2-oxobutanoate + (6R)-5,10-methylene-5,6,7,8-tetrahydrofolate + H2O = 2-dehydropantoate + (6S)-5,6,7,8-tetrahydrofolate. The protein operates within cofactor biosynthesis; (R)-pantothenate biosynthesis; (R)-pantoate from 3-methyl-2-oxobutanoate: step 1/2. Functionally, catalyzes the reversible reaction in which hydroxymethyl group from 5,10-methylenetetrahydrofolate is transferred onto alpha-ketoisovalerate to form ketopantoate. The sequence is that of 3-methyl-2-oxobutanoate hydroxymethyltransferase from Methylorubrum populi (strain ATCC BAA-705 / NCIMB 13946 / BJ001) (Methylobacterium populi).